We begin with the raw amino-acid sequence, 289 residues long: tRNA dimethylallyltransferase (289 aa).

An ATP-binding site is contributed by 9–16 (GTTASGKT). 11-16 (TASGKT) provides a ligand contact to substrate. An interaction with substrate tRNA region spans residues 34–37 (DSLC).

This sequence belongs to the IPP transferase family. Monomer. Mg(2+) serves as cofactor.

It catalyses the reaction adenosine(37) in tRNA + dimethylallyl diphosphate = N(6)-dimethylallyladenosine(37) in tRNA + diphosphate. Functionally, catalyzes the transfer of a dimethylallyl group onto the adenine at position 37 in tRNAs that read codons beginning with uridine, leading to the formation of N6-(dimethylallyl)adenosine (i(6)A). In Campylobacter jejuni subsp. doylei (strain ATCC BAA-1458 / RM4099 / 269.97), this protein is tRNA dimethylallyltransferase.